Reading from the N-terminus, the 296-residue chain is Protoheme IX farnesyltransferase (296 aa).

Helical transmembrane passes span 9–29 (VTKP…FLLA), 36–56 (YPLF…GCVF), 84–104 (AVSL…LWFG), 108–128 (LACW…SLYM), 133–153 (VYGT…GYCA), 163–183 (LILL…IAIF), 209–229 (ITLY…GGYA), 234–254 (LVVA…GYKV), and 265–285 (FGFS…DFMV).

This sequence belongs to the UbiA prenyltransferase family. Protoheme IX farnesyltransferase subfamily.

It localises to the cell inner membrane. It catalyses the reaction heme b + (2E,6E)-farnesyl diphosphate + H2O = Fe(II)-heme o + diphosphate. Its pathway is porphyrin-containing compound metabolism; heme O biosynthesis; heme O from protoheme: step 1/1. Its function is as follows. Converts heme B (protoheme IX) to heme O by substitution of the vinyl group on carbon 2 of heme B porphyrin ring with a hydroxyethyl farnesyl side group. In Citrobacter koseri (strain ATCC BAA-895 / CDC 4225-83 / SGSC4696), this protein is Protoheme IX farnesyltransferase.